The following is a 157-amino-acid chain: Succinate dehydrogenase [ubiquinone] cytochrome b small subunit, mitochondrial (157 aa).

The N-terminal 45 residues, 1–45, are a transit peptide targeting the mitochondrion; that stretch reads MAALVLLRAGLARPRGVPTALLRGTLLRHSAVLTAAADRSAPARQ. The Mitochondrial matrix portion of the chain corresponds to 46 to 61; the sequence is SHGGAPQGHGSSKAAS. Residues 62–83 traverse the membrane as a helical segment; that stretch reads LHWTSERAVSALLLGLLPAAYL. Over 84-88 the chain is Mitochondrial intermembrane; sequence YPGPA. The chain crosses the membrane as a helical span at residues 89–109; it reads VDYSLAAALTLHGHWGLGQVI. H100 provides a ligand contact to heme b. The Mitochondrial matrix segment spans residues 110 to 118; it reads TDYVHGDTP. Y112 lines the a ubiquinone pocket. The helical transmembrane segment at 119–140 threads the bilayer; sequence IKVANTGLYVLSAITFTGLCYF. At 141-157 the chain is on the mitochondrial intermembrane side; the sequence is NYYDVGICKAVAMLWSI.

The protein belongs to the CybS family. In terms of assembly, component of complex II composed of four subunits: the flavoprotein (FP) SDHA, iron-sulfur protein (IP) SDHB, and a cytochrome b560 composed of SDHC and SDHD.

It is found in the mitochondrion inner membrane. It functions in the pathway carbohydrate metabolism; tricarboxylic acid cycle. Functionally, membrane-anchoring subunit of succinate dehydrogenase (SDH) that is involved in complex II of the mitochondrial electron transport chain and is responsible for transferring electrons from succinate to ubiquinone (coenzyme Q). SDH also oxidizes malate to the non-canonical enol form of oxaloacetate, enol-oxaloacetate. Enol-oxaloacetate, which is a potent inhibitor of the succinate dehydrogenase activity, is further isomerized into keto-oxaloacetate. This is Succinate dehydrogenase [ubiquinone] cytochrome b small subunit, mitochondrial (SDHD) from Gallus gallus (Chicken).